The sequence spans 298 residues: Acetylglutamate kinase (298 aa).

Residues 69-70 (GG), Arg91, and Asn196 each bind substrate.

The protein belongs to the acetylglutamate kinase family. ArgB subfamily.

Its subcellular location is the cytoplasm. The enzyme catalyses N-acetyl-L-glutamate + ATP = N-acetyl-L-glutamyl 5-phosphate + ADP. It participates in amino-acid biosynthesis; L-arginine biosynthesis; N(2)-acetyl-L-ornithine from L-glutamate: step 2/4. Its function is as follows. Catalyzes the ATP-dependent phosphorylation of N-acetyl-L-glutamate. In Bradyrhizobium sp. (strain BTAi1 / ATCC BAA-1182), this protein is Acetylglutamate kinase.